The chain runs to 351 residues: uncharacterized protein (351 aa).

A signal peptide spans 1–27 (MKNKKRVLIASSLSCAILLLSAATTQA). Residues 27 to 71 (ANSAHKDSQDQNKKEHVDKSQQKDKRNVTNKDKNSTAPDDIGKNG) form a disordered region. The span at 30–60 (AHKDSQDQNKKEHVDKSQQKDKRNVTNKDKN) shows a compositional bias: basic and acidic residues.

It belongs to the aerolysin family.

This is an uncharacterized protein from Staphylococcus aureus (strain USA300).